The chain runs to 262 residues: uncharacterized protein (262 aa).

This sequence belongs to the BtpA family.

This is an uncharacterized protein from Pyrococcus furiosus (strain ATCC 43587 / DSM 3638 / JCM 8422 / Vc1).